The chain runs to 465 residues: Chromosomal replication initiator protein DnaA (465 aa).

The tract at residues 1 to 84 (MSLSLWQQCL…RFEVGSKPLV (84 aa)) is domain I, interacts with DnaA modulators. The domain II stretch occupies residues 84 to 128 (VQAISQPAQPHHKQVSAAPQQQVRSAPVRPSWDNSPAQAEHTYRS). The interval 91-120 (AQPHHKQVSAAPQQQVRSAPVRPSWDNSPA) is disordered. Residues 129 to 345 (NVNPKHTFDN…GALNRVIANA (217 aa)) are domain III, AAA+ region. ATP contacts are provided by G173, G175, K176, and T177. The domain IV, binds dsDNA stretch occupies residues 346-465 (NFTGRSITID…FSNLIRTLSS (120 aa)).

It belongs to the DnaA family. As to quaternary structure, oligomerizes as a right-handed, spiral filament on DNA at oriC.

The protein localises to the cytoplasm. Its function is as follows. Plays an essential role in the initiation and regulation of chromosomal replication. ATP-DnaA binds to the origin of replication (oriC) to initiate formation of the DNA replication initiation complex once per cell cycle. Binds the DnaA box (a 9 base pair repeat at the origin) and separates the double-stranded (ds)DNA. Forms a right-handed helical filament on oriC DNA; dsDNA binds to the exterior of the filament while single-stranded (ss)DNA is stabiized in the filament's interior. The ATP-DnaA-oriC complex binds and stabilizes one strand of the AT-rich DNA unwinding element (DUE), permitting loading of DNA polymerase. After initiation quickly degrades to an ADP-DnaA complex that is not apt for DNA replication. Binds acidic phospholipids. The protein is Chromosomal replication initiator protein DnaA of Pectobacterium carotovorum subsp. carotovorum (strain PC1).